Here is a 134-residue protein sequence, read N- to C-terminus: Holo-[acyl-carrier-protein] synthase (134 aa).

Positions 8 and 57 each coordinate Mg(2+).

The protein belongs to the P-Pant transferase superfamily. AcpS family. Mg(2+) is required as a cofactor.

The protein localises to the cytoplasm. It carries out the reaction apo-[ACP] + CoA = holo-[ACP] + adenosine 3',5'-bisphosphate + H(+). Functionally, transfers the 4'-phosphopantetheine moiety from coenzyme A to a Ser of acyl-carrier-protein. The protein is Holo-[acyl-carrier-protein] synthase of Rhizobium johnstonii (strain DSM 114642 / LMG 32736 / 3841) (Rhizobium leguminosarum bv. viciae).